The sequence spans 543 residues: Chaperonin GroEL (543 aa).

ATP-binding positions include 29-32 (TVGP), 86-90 (DGTTT), Gly413, and Asp504.

This sequence belongs to the chaperonin (HSP60) family. Forms a cylinder of 14 subunits composed of two heptameric rings stacked back-to-back. Interacts with the co-chaperonin GroES.

It is found in the cytoplasm. The enzyme catalyses ATP + H2O + a folded polypeptide = ADP + phosphate + an unfolded polypeptide.. In terms of biological role, together with its co-chaperonin GroES, plays an essential role in assisting protein folding. The GroEL-GroES system forms a nano-cage that allows encapsulation of the non-native substrate proteins and provides a physical environment optimized to promote and accelerate protein folding. The sequence is that of Chaperonin GroEL from Mycoplasma genitalium (strain ATCC 33530 / DSM 19775 / NCTC 10195 / G37) (Mycoplasmoides genitalium).